The sequence spans 114 residues: Large ribosomal subunit protein bL20c (114 aa).

This sequence belongs to the bacterial ribosomal protein bL20 family.

Its subcellular location is the plastid. It is found in the cyanelle. Its function is as follows. Binds directly to 23S ribosomal RNA and is necessary for the in vitro assembly process of the 50S ribosomal subunit. It is not involved in the protein synthesizing functions of that subunit. The protein is Large ribosomal subunit protein bL20c (rpl20) of Cyanophora paradoxa.